A 63-amino-acid chain; its full sequence is Large ribosomal subunit protein bL28 (63 aa).

It belongs to the bacterial ribosomal protein bL28 family.

This is Large ribosomal subunit protein bL28 from Clostridium perfringens (strain ATCC 13124 / DSM 756 / JCM 1290 / NCIMB 6125 / NCTC 8237 / Type A).